Here is a 698-residue protein sequence, read N- to C-terminus: Glycine--tRNA ligase beta subunit (698 aa).

The protein belongs to the class-II aminoacyl-tRNA synthetase family. As to quaternary structure, tetramer of two alpha and two beta subunits.

It localises to the cytoplasm. It carries out the reaction tRNA(Gly) + glycine + ATP = glycyl-tRNA(Gly) + AMP + diphosphate. The sequence is that of Glycine--tRNA ligase beta subunit from Xanthomonas campestris pv. campestris (strain B100).